A 73-amino-acid polypeptide reads, in one-letter code: Toxin Td3 (73 aa).

The N-terminal stretch at 1-7 (IGMVVEC) is a signal peptide. The LCN-type CS-alpha/beta domain occupies 8–70 (KDGYLMGPDG…VWERATNRCG (63 aa)). Disulfide bonds link Cys18/Cys69, Cys22/Cys44, Cys30/Cys50, and Cys34/Cys52. A Lysine amide modification is found at Lys71.

The protein belongs to the long (4 C-C) scorpion toxin superfamily. Sodium channel inhibitor family. Beta subfamily. In terms of tissue distribution, expressed by the venom gland.

It localises to the secreted. Beta toxins bind voltage-independently at site-4 of sodium channels (Nav) and shift the voltage of activation toward more negative potentials thereby affecting sodium channel activation and promoting spontaneous and repetitive firing. In Tityus discrepans (Venezuelan scorpion), this protein is Toxin Td3.